Consider the following 287-residue polypeptide: MSSNFLHMPMTITMSSQNFQHHDHSSYFASITKDIEAHLKQSIIVKPPFTVYEPMYNLAFTTPPTSAPLLCVAACELVGGHRRQAVAAASSLHLMHVASFTHEHLPLTDRSNPNPMIHHAYNPNIELLIPDAIVPFGCELLTRLDNPIEDDHADRVLKVIVEITRAFGSQGIIDGQFHEKVVNRSNGEEENNNADWIDYTCRKKEGKLYACAATCGAILGGANEEEEEKLSKFGLYVGMIQGYSKIGRGKEEERLKRVEELTKLAIKELEHFKGRRVEEISSIILGP.

Residues E103 and D109 each contribute to the Mg(2+) site. The dimethylallyl diphosphate site is built by K204, Q241, and K250.

Belongs to the FPP/GGPP synthase family. In terms of assembly, part of a heterodimeric geranyl(geranyl)diphosphate synthase. The cofactor is Mg(2+). In terms of tissue distribution, mainly expressed in trichomes, and, to a lower extent, in roots, leaves, flowers and stems.

Its subcellular location is the plastid. It is found in the chloroplast thylakoid membrane. In terms of biological role, heterodimeric geranyl(geranyl)-diphosphate (GPP) synthase small subunit. The small subunit alone is inactive in vitro while the large subunit GGPPS1 catalyzes mainly the production of geranygeranyl-diphosphate in vitro. Upon association of the two subunits, the product profile changes and the production of gerany-diphosphate is strongly increased. The chain is Heterodimeric geranylgeranyl pyrophosphate synthase small subunit 2, chloroplastic from Cannabis sativa (Hemp).